The following is a 78-amino-acid chain: UPF0349 protein SAHV_0934 (78 aa).

Belongs to the UPF0349 family.

The polypeptide is UPF0349 protein SAHV_0934 (Staphylococcus aureus (strain Mu3 / ATCC 700698)).